A 207-amino-acid chain; its full sequence is MQQPCVIVGSKYCSPNPVGLAIVRKVMKITDGNFVITSADGKLLFKVKDPLFSLHGKRILLDCSGAKVLTLRGKMMTMHDRWQVFRGGSTEEGALLYTVKRSSMIQLAPKLEVFLANNVEEKICDFKVKGAWLDDSCVVYAGDSDTIIAHMCGKQTMRGFFFGKDHFSVTVDKNVDYAFIASLIVILVEIEKAGFITKMTTQMIIGF.

Belongs to the LOR family. As to expression, limited to discrete pathogen infection sites in leaves.

Its function is as follows. Involved in basal defense against virulent oomycetes. Might be related to the phospholipid scramblase and tubby-like superfamily of membrane tethered transcription factors. This Arabidopsis thaliana (Mouse-ear cress) protein is Protein LURP1 (LURP1).